A 57-amino-acid polypeptide reads, in one-letter code: Phosphatase RapH inhibitor (57 aa).

2 consecutive propeptides follow at residues 1–34 and 41–57; these read MPIK…FKES and YIDH…KALS. The tract at residues 26–57 is disordered; sequence TNSGGFKESTDRNTTYIDHSPYKLSDQKKALS.

It belongs to the Phr family. Contains a predicted signal peptide cleavage site in the N-terminal region, however the propeptide is probably only subject to processing events at the ends of the mature peptide.

Its subcellular location is the secreted. The protein resides in the cytoplasm. Its function is as follows. Signaling molecule involved the regulation of both sporulation and competence. Secreted during production, but the mature peptide acts intracellularly, indicating that it needs to be imported into the cell to function. Acts by inhibiting RapH activity. Can inhibit both RapH activities, the dephosphorylation of Spo0F and the sequestration of ComA. In Bacillus subtilis (strain 168), this protein is Phosphatase RapH inhibitor (phrH).